Consider the following 236-residue polypeptide: Oligogalacturonate-specific porin KdgM (236 aa).

Residues 1 to 20 (MKIKLLTLAVASLVSVNALA) form the signal peptide.

Belongs to the oligogalacturonate-specific porin KdgM (TC 1.B.35) family. As to quaternary structure, monomer.

Its subcellular location is the cell outer membrane. Porin specific for oligogalacturonides. Also required for full virulence. In Dickeya dadantii (strain 3937) (Erwinia chrysanthemi (strain 3937)), this protein is Oligogalacturonate-specific porin KdgM (kdgM).